Here is a 448-residue protein sequence, read N- to C-terminus: Ribosomal protein uS12 methylthiotransferase RimO (448 aa).

The 111-residue stretch at 16-126 (PRISFVSLGC…VVAAVHEAVP (111 aa)) folds into the MTTase N-terminal domain. [4Fe-4S] cluster-binding residues include Cys25, Cys61, Cys90, Cys157, Cys161, and Cys164. The region spanning 143 to 380 (LTPRHYAYLK…MEAQAGVSLK (238 aa)) is the Radical SAM core domain. In terms of domain architecture, TRAM spans 383-448 (RAKVGKRLQV…DAYDLHGIAV (66 aa)).

The protein belongs to the methylthiotransferase family. RimO subfamily. [4Fe-4S] cluster is required as a cofactor.

It localises to the cytoplasm. It catalyses the reaction L-aspartate(89)-[ribosomal protein uS12]-hydrogen + (sulfur carrier)-SH + AH2 + 2 S-adenosyl-L-methionine = 3-methylsulfanyl-L-aspartate(89)-[ribosomal protein uS12]-hydrogen + (sulfur carrier)-H + 5'-deoxyadenosine + L-methionine + A + S-adenosyl-L-homocysteine + 2 H(+). Catalyzes the methylthiolation of an aspartic acid residue of ribosomal protein uS12. This is Ribosomal protein uS12 methylthiotransferase RimO from Methylorubrum populi (strain ATCC BAA-705 / NCIMB 13946 / BJ001) (Methylobacterium populi).